Consider the following 518-residue polypeptide: Glutamate--cysteine ligase (518 aa).

It belongs to the glutamate--cysteine ligase type 1 family. Type 1 subfamily.

The enzyme catalyses L-cysteine + L-glutamate + ATP = gamma-L-glutamyl-L-cysteine + ADP + phosphate + H(+). It participates in sulfur metabolism; glutathione biosynthesis; glutathione from L-cysteine and L-glutamate: step 1/2. The chain is Glutamate--cysteine ligase from Shigella boydii serotype 4 (strain Sb227).